Consider the following 408-residue polypeptide: Succinylornithine transaminase (408 aa).

K252 carries the post-translational modification N6-(pyridoxal phosphate)lysine.

This sequence belongs to the class-III pyridoxal-phosphate-dependent aminotransferase family. AstC subfamily. Pyridoxal 5'-phosphate is required as a cofactor.

The enzyme catalyses N(2)-succinyl-L-ornithine + 2-oxoglutarate = N-succinyl-L-glutamate 5-semialdehyde + L-glutamate. Its pathway is amino-acid degradation; L-arginine degradation via AST pathway; L-glutamate and succinate from L-arginine: step 3/5. Its function is as follows. Catalyzes the transamination of N(2)-succinylornithine and alpha-ketoglutarate into N(2)-succinylglutamate semialdehyde and glutamate. Can also act as an acetylornithine aminotransferase. This is Succinylornithine transaminase from Salmonella enteritidis PT4 (strain P125109).